The following is a 428-amino-acid chain: Serine--tRNA ligase (428 aa).

Residue 231 to 233 (TAE) participates in L-serine binding. 262–264 (RSE) serves as a coordination point for ATP. Glu285 lines the L-serine pocket. 349 to 352 (EISS) contributes to the ATP binding site. Ser385 contributes to the L-serine binding site.

It belongs to the class-II aminoacyl-tRNA synthetase family. Type-1 seryl-tRNA synthetase subfamily. In terms of assembly, homodimer. The tRNA molecule binds across the dimer.

The protein localises to the cytoplasm. It catalyses the reaction tRNA(Ser) + L-serine + ATP = L-seryl-tRNA(Ser) + AMP + diphosphate + H(+). The catalysed reaction is tRNA(Sec) + L-serine + ATP = L-seryl-tRNA(Sec) + AMP + diphosphate + H(+). Its pathway is aminoacyl-tRNA biosynthesis; selenocysteinyl-tRNA(Sec) biosynthesis; L-seryl-tRNA(Sec) from L-serine and tRNA(Sec): step 1/1. Its function is as follows. Catalyzes the attachment of serine to tRNA(Ser). Is also able to aminoacylate tRNA(Sec) with serine, to form the misacylated tRNA L-seryl-tRNA(Sec), which will be further converted into selenocysteinyl-tRNA(Sec). This chain is Serine--tRNA ligase, found in Staphylococcus carnosus (strain TM300).